The chain runs to 2531 residues: Highly reducing polyketide synthase gloL (2531 aa).

The 421-residue stretch at 15-435 folds into the Ketosynthase family 3 (KS3) domain; it reads YEPLAIVGMG…GANAHVILDS (421 aa). Active-site for beta-ketoacyl synthase activity residues include Cys-187, His-322, and His-358. The tract at residues 449 to 525 is disordered; that stretch reads TNGLSVNGHS…GHSVNGHSKP (77 aa). Residues 453–503 show a composition bias toward low complexity; the sequence is SVNGHSINGNSVNGHSVNGHSTNGHSINGNSVNGHSVNGNSVNGHSTNGHS. Residues 505 to 521 are compositionally biased toward polar residues; the sequence is NGHSANGNSINGHSVNG. The interval 602–909 is malonyl-CoA:ACP transacylase (MAT) domain; that stretch reads MVFTGQGAQW…VTALERGKDC (308 aa). The tract at residues 971 to 1099 is N-terminal hotdog fold; sequence HEILGSRTVE…GQIRSGTDNP (129 aa). Residues 971–1251 form a dehydratase (DH) domain region; that stretch reads HEILGSRTVE…GGQFSPIEED (281 aa). The 284-residue stretch at 971–1254 folds into the PKS/mFAS DH domain; sequence HEILGSRTVE…FSPIEEDSSD (284 aa). His-1003 serves as the catalytic Proton acceptor; for dehydratase activity. The tract at residues 1109–1254 is C-terminal hotdog fold; the sequence is DHPRSVPSPY…FSPIEEDSSD (146 aa). Asp-1169 serves as the catalytic Proton donor; for dehydratase activity. Residues 1419–1597 form a methyltransferase (CMet) domain region; that stretch reads DFFTAAGHSK…FSGCDATVYD (179 aa). Positions 1806 to 2114 are enoyl reductase (ER) (ER) domain; the sequence is GLLQTLRWVP…KGSHIGKIVV (309 aa). Residues 2139–2312 form a ketoreductase (KR) domain region; sequence GYLLVGGLGG…ASVVDIGVMG (174 aa). The Carrier domain maps to 2413–2505; sequence MSSVETDSSI…ALGLLTIEGL (93 aa). At Ser-2464 the chain carries O-(pantetheine 4'-phosphoryl)serine.

It functions in the pathway mycotoxin biosynthesis. Functionally, highly reducing polyketide synthase; part of the gene cluster that mediates the biosynthesis of pneumocandins, lipohexapeptides of the echinocandin family that prevent fungal cell wall formation by non-competitive inhibition of beta-1,3-glucan synthase. The 10,12-dimethylmyristoyl side chain is synthesized by the reducing polyketide synthase gloL/GLPKS4. The thioesterase gloN/GLHYD exclusively interacts with gloL/GLPKS4 to maintain turnover of the polyketide side chain. The 10R,12S-dimethylmyristic acid is then transferred to the first thiolation domain of the nonribosomal peptide synthetase gloA/GLNRPS4 by the acyl-AMP ligase gloD/GLligase, followed by its acylation to L-ornithine to trigger elongation of the cyclic hexapeptide. L-ornithine, 4R-hydroxyl-L-proline (generated from L-proline by the dioxygenase gloF/GLOXY2), 3S-hydroxyl-L-homotyrosine (generated by gloG/GLHtyB, gloH/GLHtyA, gloI/GLHtyC, gloJ/GLHtyD and hydroxylated at C-3 by the dioxygenase gloM/GLOXY1), 3R-hydroxyl-L-glutamine (generated from L-glutamine probably by the dioxygenase gloE/GLOXY3) and 3S-hydroxyl-L-proline (generated from L-proline by the dioxygenase gloF/GLOXY2 to yield pneumocandin B0), or 3S-hydroxyl-4S-methyl-L-proline (generated from L-leucine by the dioxygenase gloC/GLOXY4 to yield pneumocandin A0) are sequentially added to the growing chain. The last C domain of gloA/GLNRPS4 is proposed to be responsible for cyclization by condensation to form the peptide bond between L-ornithine and 3S-hydroxyl-4S-methyl-L-proline (for pneumocandin A0) or 3S-hydroxyl-L-proline (for pneumocandin B0). Finally, the subsequent C-4 hydroxylation of 3S-hydroxyl-L-homotyrosine and L-ornithine dihydroxylation at C-4 and C-5 are performed by the cytochrome P450 monooxygenases gloP/GLP450-1 and gloO/GLP450-2, respectively. This Glarea lozoyensis (strain ATCC 20868 / MF5171) protein is Highly reducing polyketide synthase gloL.